Reading from the N-terminus, the 464-residue chain is Opioid growth factor receptor-like protein 1 (464 aa).

Disordered regions lie at residues 1–91 (MGNL…AKPK) and 309–464 (ENFI…TSSG). Basic and acidic residues predominate over residues 43-59 (QQHDEPEQPKQPPERAG). The segment covering 74–86 (AAGAEQGGESTEG) has biased composition (low complexity). Residues 316–325 (PKKELPERSK) show a composition bias toward basic and acidic residues. Polar residues predominate over residues 327 to 342 (QKTPTLPASGSNGQTS). 3 stretches are compositionally biased toward basic and acidic residues: residues 363 to 382 (SVEEKKGASREPGEEADKPS), 390 to 400 (PKPRNTEKDSA), and 425 to 439 (SEKDGEGEDQSKDSE). A compositionally biased stretch (polar residues) spans 452–464 (AQQNATNPQTSSG).

The protein belongs to the opioid growth factor receptor family.

The polypeptide is Opioid growth factor receptor-like protein 1 (Ogfrl1) (Mus musculus (Mouse)).